An 86-amino-acid chain; its full sequence is UPF0457 protein SSP0714 (86 aa).

It belongs to the UPF0457 family.

The polypeptide is UPF0457 protein SSP0714 (Staphylococcus saprophyticus subsp. saprophyticus (strain ATCC 15305 / DSM 20229 / NCIMB 8711 / NCTC 7292 / S-41)).